Consider the following 568-residue polypeptide: Urease subunit alpha (568 aa).

One can recognise a Urease domain in the interval 133 to 568 (GGVDTHIHFI…LPLAQKYFLF (436 aa)). His138, His140, and Lys221 together coordinate Ni(2+). Lys221 carries the N6-carboxylysine modification. A substrate-binding site is contributed by His223. Residues His250 and His276 each coordinate Ni(2+). The active-site Proton donor is His324. Position 364 (Asp364) interacts with Ni(2+).

This sequence belongs to the metallo-dependent hydrolases superfamily. Urease alpha subunit family. As to quaternary structure, heterohexamer of 3 UreC (alpha) and 3 UreAB (gamma/beta) subunits. Ni cation serves as cofactor. In terms of processing, carboxylation allows a single lysine to coordinate two nickel ions.

The protein localises to the cytoplasm. The catalysed reaction is urea + 2 H2O + H(+) = hydrogencarbonate + 2 NH4(+). It functions in the pathway nitrogen metabolism; urea degradation; CO(2) and NH(3) from urea (urease route): step 1/1. The polypeptide is Urease subunit alpha (Deinococcus radiodurans (strain ATCC 13939 / DSM 20539 / JCM 16871 / CCUG 27074 / LMG 4051 / NBRC 15346 / NCIMB 9279 / VKM B-1422 / R1)).